A 328-amino-acid chain; its full sequence is Olfactory receptor 2AJ1 (328 aa).

The Extracellular portion of the chain corresponds to 1-25 (MGHQNHTFSSDFILLGLFSSSPTSV). Asn5 is a glycosylation site (N-linked (GlcNAc...) asparagine). The chain crosses the membrane as a helical span at residues 26-49 (VFFLVLFVIFIMSVTENTLMILLI). Over 50–57 (RSDSRLHT) the chain is Cytoplasmic. The chain crosses the membrane as a helical span at residues 58–79 (PMYFLLSHLSLMDILHVSNIVP). Residues 80-100 (KMVTNFLSGSRTISFAGCGFQ) are Extracellular-facing. Cys97 and Cys189 are oxidised to a cystine. The chain crosses the membrane as a helical span at residues 101–120 (VFLSLTLLGGECLLLAAMSC). The Cytoplasmic portion of the chain corresponds to 121 to 139 (DRYVAICHPLRYPILMKEY). The chain crosses the membrane as a helical span at residues 140–158 (ASALMAGGSWLIGVFNSTV). The Extracellular segment spans residues 159 to 195 (HTAYALQFPFCGSRAIDHFFCEVPAMLKLSCADTTRY). A helical membrane pass occupies residues 196-219 (ERGVCVSAVIFLLIPFSLISASYG). At 220 to 236 (QIILTVLQMKSSEARKK) the chain is on the cytoplasmic side. The chain crosses the membrane as a helical span at residues 237–259 (SFSTCSFHMIVVTMYYGPFIFTY). Residues 260–272 (MRPKSYHTPGQDK) are Extracellular-facing. The chain crosses the membrane as a helical span at residues 273 to 292 (FLAIFYTILTPTLNPFIYSF). At 293-328 (RNKDVLAVMKNMLKSNFLHKKMNRKIPECVFCLFLC) the chain is on the cytoplasmic side.

Belongs to the G-protein coupled receptor 1 family.

It is found in the cell membrane. In terms of biological role, odorant receptor. This is Olfactory receptor 2AJ1 (OR2AJ1) from Homo sapiens (Human).